Consider the following 190-residue polypeptide: MRLRFSLLLTVSLLAGCASAPPATLQHRDNIRDFSLEGRFALRVAMPDQAPQSSGGRLSWTHRNRSDRVLLSSPLGYGLAEIETTPELSRLRTAEGKQSESTDPDTLIEEVTGQRLPVTRMPAWLLGRSGGKAQIFNDPIGRPGKLLEDGWQVDYTYDDEAPAALPSRLNISRDGEIELKLRIEEWKETP.

Residues M1–G16 form the signal peptide. C17 is lipidated: N-palmitoyl cysteine. The S-diacylglycerol cysteine moiety is linked to residue C17.

This sequence belongs to the LolB family. As to quaternary structure, monomer.

Its subcellular location is the cell outer membrane. In terms of biological role, plays a critical role in the incorporation of lipoproteins in the outer membrane after they are released by the LolA protein. This chain is Outer-membrane lipoprotein LolB, found in Dechloromonas aromatica (strain RCB).